Here is a 154-residue protein sequence, read N- to C-terminus: Cytochrome c-550 (154 aa).

An N-terminal signal peptide occupies residues 1-20 (MKISIYATLAALSLALPAVA). The residue at position 21 (Gln-21) is a Pyrrolidone carboxylic acid. Residues Cys-35, Cys-38, His-39, and Met-120 each coordinate heme c. A propeptide spanning residues 150–154 (EGAAN) is cleaved from the precursor.

Post-translationally, binds 1 heme c group covalently per subunit.

The sequence is that of Cytochrome c-550 (cyc) from Paracoccus versutus (Thiobacillus versutus).